A 272-amino-acid chain; its full sequence is MIYIGLPQWSHPKWVRLGITSLEEYARHFNCVEGNTTLYALPKPEVVLRWREQTTDDFRFCFKFPATISHQAALRHCDDLVTEFLTRMSPLAPRIGQYWLQLPATFGPRELPALWHFLDSLPGEFNYGVEVRHPQFFAKGEEEQTLNRGLHQRGVNRVILDSRPVHAARPHSEAIRDAQRKKPKVPVHAVLTATNPLIRFIGSDDMTQNRELFQVWLQKLAQWHQTTTPYLFLHTPDIAQAPELVHTLWEDLRKTLPEIGAVPAIPQQSSLF.

The protein belongs to the UPF0759 family.

In Escherichia coli (strain K12), this protein is UPF0759 protein YecE (yecE).